We begin with the raw amino-acid sequence, 147 residues long: Sec-independent protein translocase protein TatB (147 aa).

A helical membrane pass occupies residues 1–21; the sequence is MFDIGFWELVVIGVVALVVLG. The disordered stretch occupies residues 114–147; that stretch reads EPVAPISVATPDEEPTVIPAARAQPSAEQGEVKP.

Belongs to the TatB family. In terms of assembly, the Tat system comprises two distinct complexes: a TatABC complex, containing multiple copies of TatA, TatB and TatC subunits, and a separate TatA complex, containing only TatA subunits. Substrates initially bind to the TatABC complex, which probably triggers association of the separate TatA complex to form the active translocon.

Its subcellular location is the cell inner membrane. Part of the twin-arginine translocation (Tat) system that transports large folded proteins containing a characteristic twin-arginine motif in their signal peptide across membranes. Together with TatC, TatB is part of a receptor directly interacting with Tat signal peptides. TatB may form an oligomeric binding site that transiently accommodates folded Tat precursor proteins before their translocation. The sequence is that of Sec-independent protein translocase protein TatB from Aeromonas hydrophila subsp. hydrophila (strain ATCC 7966 / DSM 30187 / BCRC 13018 / CCUG 14551 / JCM 1027 / KCTC 2358 / NCIMB 9240 / NCTC 8049).